The following is a 313-amino-acid chain: Trimeric intracellular cation channel type 1B.2 (313 aa).

Residues 1-28 (MGWVPDEWSIDHDTLIDAGGYVQKLKLY) lie on the Lumenal side of the membrane. The chain crosses the membrane as a helical span at residues 29 to 48 (PYFDAAHYVLTCLSVRHDLG). The Cytoplasmic portion of the chain corresponds to 49-57 (PDAISFSRK). The chain crosses the membrane as a discontinuously helical span at residues 58–82 (HPFSCWLSCMLMSFAGSFLSCFLLG). The Lumenal segment spans residues 83–90 (EPIISPLK). The chain crosses the membrane as a helical span at residues 91–108 (QHADILLGSIVWYLVFYS). Residues 109-118 (PFDVVFRLAT) lie on the Cytoplasmic side of the membrane. A helical membrane pass occupies residues 119–149 (WFPVKLGLSVLKEVQRTHKIAAGVKHAVRIY). Residues Lys-130 and Arg-134 each coordinate a 1,2-diacyl-sn-glycero-3-phospho-(1D-myo-inositol-4,5-bisphosphate). The Lumenal segment spans residues 150 to 151 (PE). The chain crosses the membrane as a discontinuously helical span at residues 152–178 (SYLVQILVGVAKGAGSGVVKIVEQLAR). Gly-168 contributes to the a 1,2-diacyl-sn-glycero-3-phospho-(1D-myo-inositol-4,5-bisphosphate) binding site. Over 179–192 (GTWHPTNHEILRPS) the chain is Cytoplasmic. A helical membrane pass occupies residues 193 to 210 (FTTKACVIASIVFTLERH). Residues 211–216 (SMYVTA) are Lumenal-facing. Residues 217–239 (PHDLVYLCVVGFFIYFKLASLCL) traverse the membrane as a helical segment. At 240–313 (SVHDVLMPIE…MSNGTDKKNN (74 aa)) the chain is on the cytoplasmic side.

This sequence belongs to the TMEM38 family. In terms of assembly, homotrimer; trimerization probably requires binding to phosphatidylinositol 4,5-bisphosphate (PIP2).

It localises to the endoplasmic reticulum membrane. Functionally, potassium channel that mediates transmembrane potassium transport. Might be required for maintenance of rapid intracellular calcium release. May act as a potassium counter-ion channel that functions in synchronization with calcium release from intracellular stores. Binds phosphatidylinositol 4,5-bisphosphate (PIP2). The chain is Trimeric intracellular cation channel type 1B.2 from Caenorhabditis elegans.